The chain runs to 1293 residues: DNA repair protein complementing XP-C cells homolog (1293 aa).

Disordered stretches follow at residues 1 to 199 (MSDE…FEDK), 217 to 239 (ERTR…QAAT), 255 to 341 (QSVE…NISG), 514 to 640 (DLIP…SKCL), and 658 to 919 (LSSK…EPAK). Residues 18–30 (DEWKPSKDVKGGE) are compositionally biased toward basic and acidic residues. Residues Ser-31, Ser-32, and Ser-37 each carry the phosphoserine modification. The span at 31–43 (SSDDDDSDFDELQ) shows a compositional bias: acidic residues. The span at 51 to 60 (SSGRSSAVAG) shows a compositional bias: low complexity. 2 stretches are compositionally biased toward polar residues: residues 101-130 (FPTS…SGAR) and 226-238 (RNVT…SQAA). Residues 288-301 (SKTKSTRIKRHTKT) show a composition bias toward basic residues. Residues 313-335 (DTDDSDFEEVADADLSSDQDDGE) are compositionally biased toward acidic residues. A compositionally biased stretch (basic and acidic residues) spans 520 to 578 (LRPDDKNKSQTVESERESEDEKPKKDKKAGKPAEKESSKSTISKEAEKKNNAKKAEAKP). Phosphoserine is present on residues Ser-533 and Ser-537. Residues 580-594 (SKSTTKGSETTKSGT) are compositionally biased toward low complexity. The segment covering 598–612 (VKKELSLSSKLVEKS) has biased composition (basic and acidic residues). Residues 658–692 (LSSKLVLKSKNQSSFSSNKSDTSFEENPSTSSSSK) are compositionally biased toward low complexity. Positions 693–711 (SLKEETAKLSSSKLEDKKV) are enriched in basic and acidic residues. Over residues 720 to 737 (KVQSSLLKRVTTQNISES) the composition is skewed to polar residues. Residues 806 to 818 (HLQEQRNTRETRS) are compositionally biased toward basic and acidic residues. 2 positions are modified to phosphoserine: Ser-908 and Ser-911. Short sequence motifs (nuclear localization signal) lie at residues 922-938 (KKAP…RKDR), 1195-1211 (KKTV…ICKK), and 1275-1291 (KKLI…KKKY).

It belongs to the XPC family. Heterodimer.

It localises to the nucleus. In terms of biological role, involved in DNA excision repair. May play a part in DNA damage recognition and/or in altering chromatin structure to allow access by damage-processing enzymes. Functionally, involved in nucleotide excision repair of DNA damaged with UV light, bulky adducts, or cross-linking agents. The protein is DNA repair protein complementing XP-C cells homolog of Drosophila melanogaster (Fruit fly).